The chain runs to 88 residues: UPF0297 protein LAR_0520 (88 aa).

Belongs to the UPF0297 family.

This is UPF0297 protein LAR_0520 from Limosilactobacillus reuteri subsp. reuteri (strain JCM 1112) (Lactobacillus reuteri).